The chain runs to 487 residues: UDP-glucose flavonoid 3-O-glucosyltransferase 7 (487 aa).

The active-site Proton acceptor is histidine 23. Histidine 23 serves as a coordination point for an anthocyanidin. Aspartate 121 acts as the Charge relay in catalysis. Residues alanine 345, glutamine 347, histidine 362, tryptophan 365, asparagine 366, serine 367, and glutamate 370 each contribute to the UDP-alpha-D-glucose site. Glycine 385 provides a ligand contact to an anthocyanidin. The UDP-alpha-D-glucose site is built by glutamate 386 and glutamine 387.

Belongs to the UDP-glycosyltransferase family. In terms of tissue distribution, strongly expressed in achenes and receptacles.

The enzyme catalyses a flavonol + UDP-alpha-D-glucose = a flavonol 3-O-beta-D-glucoside + UDP + H(+). In terms of biological role, broad spectrum multifunctional glucosyltransferase. Catalyzes the formation of flavonol 3-O- and 4'-O-glucosides during fruit ripening. Accepted substrates include several flavonoids, hydroxycoumarins and beta-naphthols. Uses UDP-Glc as a sugar donor, but not UDP-Gal or UDP-GlcUA. May also be involved in detoxification of xenobiotics. In Fragaria ananassa (Strawberry), this protein is UDP-glucose flavonoid 3-O-glucosyltransferase 7.